The following is a 208-amino-acid chain: Holliday junction resolvase RecU (208 aa).

Residues threonine 86, aspartate 88, glutamate 101, and glutamine 120 each contribute to the Mg(2+) site.

This sequence belongs to the RecU family. Mg(2+) is required as a cofactor.

It localises to the cytoplasm. It catalyses the reaction Endonucleolytic cleavage at a junction such as a reciprocal single-stranded crossover between two homologous DNA duplexes (Holliday junction).. In terms of biological role, endonuclease that resolves Holliday junction intermediates in genetic recombination. Cleaves mobile four-strand junctions by introducing symmetrical nicks in paired strands. Promotes annealing of linear ssDNA with homologous dsDNA. Required for DNA repair, homologous recombination and chromosome segregation. This is Holliday junction resolvase RecU from Lacticaseibacillus casei (strain BL23) (Lactobacillus casei).